Here is a 201-residue protein sequence, read N- to C-terminus: Homeobox protein ceh-28 (201 aa).

A compositionally biased stretch (polar residues) spans 72 to 84 (SYYSSPSQNQRSY). The disordered stretch occupies residues 72–94 (SYYSSPSQNQRSYQNHRQHSNPD). Residues 104–163 (KRKPRVLFTQHQVNELEERFKKQRYVTATEREELAQCLGLTATQVKIWFQNRRYKCKRLA) constitute a DNA-binding region (homeobox).

It belongs to the NK-2 homeobox family.

Its subcellular location is the nucleus. Its function is as follows. Probable transcription factor that regulates neuronal differention, including synapse assembly of the cholinergic motor neuron M4. Activates expression of growth factor, neuropeptide and transcription factor genes, such as TGF-beta dbl-1, FMRFamide-like flp-5 and transcription repressor zag-1, in the M4 neuron. Required for pharynx peristalsis. The sequence is that of Homeobox protein ceh-28 from Caenorhabditis elegans.